The chain runs to 160 residues: Large ribosomal subunit protein eL21 (160 aa).

It belongs to the eukaryotic ribosomal protein eL21 family. As to quaternary structure, component of the large ribosomal subunit. Mature ribosomes consist of a small (40S) and a large (60S) subunit. The 40S subunit contains about 32 different proteins and 1 molecule of RNA (18S). The 60S subunit contains 45 different proteins and 3 molecules of RNA (25S, 5.8S and 5S).

The protein resides in the cytoplasm. In terms of biological role, component of the ribosome, a large ribonucleoprotein complex responsible for the synthesis of proteins in the cell. The small ribosomal subunit (SSU) binds messenger RNAs (mRNAs) and translates the encoded message by selecting cognate aminoacyl-transfer RNA (tRNA) molecules. The large subunit (LSU) contains the ribosomal catalytic site termed the peptidyl transferase center (PTC), which catalyzes the formation of peptide bonds, thereby polymerizing the amino acids delivered by tRNAs into a polypeptide chain. The nascent polypeptides leave the ribosome through a tunnel in the LSU and interact with protein factors that function in enzymatic processing, targeting, and the membrane insertion of nascent chains at the exit of the ribosomal tunnel. This chain is Large ribosomal subunit protein eL21, found in Candida albicans (strain SC5314 / ATCC MYA-2876) (Yeast).